A 394-amino-acid chain; its full sequence is Flavohemoprotein (394 aa).

The Globin domain occupies 1–136 (MISQQTIDIV…LANVFITREE (136 aa)). Position 85 (His-85) interacts with heme b. Catalysis depends on charge relay system residues Tyr-95 and Glu-135. The segment at 147–394 (GGWRGTREFT…YECFGPHKVL (248 aa)) is reductase. Residues 150-255 (RGTREFTLIE…AAPAGDFFLD (106 aa)) form the FAD-binding FR-type domain. Residues Tyr-188 and 204–207 (RQYS) each bind FAD. 268 to 273 (GVGLTP) lines the NADP(+) pocket. 387–390 (CFGP) serves as a coordination point for FAD.

The protein belongs to the globin family. Two-domain flavohemoproteins subfamily. It in the C-terminal section; belongs to the flavoprotein pyridine nucleotide cytochrome reductase family. Heme b is required as a cofactor. It depends on FAD as a cofactor.

The enzyme catalyses 2 nitric oxide + NADPH + 2 O2 = 2 nitrate + NADP(+) + H(+). It carries out the reaction 2 nitric oxide + NADH + 2 O2 = 2 nitrate + NAD(+) + H(+). Functionally, is involved in NO detoxification in an aerobic process, termed nitric oxide dioxygenase (NOD) reaction that utilizes O(2) and NAD(P)H to convert NO to nitrate, which protects the bacterium from various noxious nitrogen compounds. Therefore, plays a central role in the inducible response to nitrosative stress. In Photobacterium profundum (strain SS9), this protein is Flavohemoprotein.